Here is a 426-residue protein sequence, read N- to C-terminus: Bifunctional protein GlmU (426 aa).

The pyrophosphorylase stretch occupies residues 1–216; that stretch reads MSEVDVVILA…WHDILGVNTQ (216 aa). Residues 9 to 12, lysine 23, and glutamine 69 each bind UDP-N-acetyl-alpha-D-glucosamine; that span reads LAAG. Aspartate 97 is a binding site for Mg(2+). Residues glycine 132, glutamate 148, asparagine 163, and asparagine 214 each contribute to the UDP-N-acetyl-alpha-D-glucosamine site. Residue asparagine 214 coordinates Mg(2+). Positions 217–237 are linker; it reads QQLAAVSKIARKRINDQIMAN. The N-acetyltransferase stretch occupies residues 238–426; it reads GVTMIDPLTT…AKHDQRDDQP (189 aa). The UDP-N-acetyl-alpha-D-glucosamine site is built by arginine 286 and lysine 304. The Proton acceptor role is filled by histidine 316. 2 residues coordinate UDP-N-acetyl-alpha-D-glucosamine: tyrosine 319 and asparagine 330. Residues alanine 333, 339 to 340, serine 358, alanine 376, and arginine 393 each bind acetyl-CoA; that span reads NY.

The protein in the N-terminal section; belongs to the N-acetylglucosamine-1-phosphate uridyltransferase family. In the C-terminal section; belongs to the transferase hexapeptide repeat family. As to quaternary structure, homotrimer. Mg(2+) is required as a cofactor.

The protein localises to the cytoplasm. The catalysed reaction is alpha-D-glucosamine 1-phosphate + acetyl-CoA = N-acetyl-alpha-D-glucosamine 1-phosphate + CoA + H(+). It carries out the reaction N-acetyl-alpha-D-glucosamine 1-phosphate + UTP + H(+) = UDP-N-acetyl-alpha-D-glucosamine + diphosphate. Its pathway is nucleotide-sugar biosynthesis; UDP-N-acetyl-alpha-D-glucosamine biosynthesis; N-acetyl-alpha-D-glucosamine 1-phosphate from alpha-D-glucosamine 6-phosphate (route II): step 2/2. The protein operates within nucleotide-sugar biosynthesis; UDP-N-acetyl-alpha-D-glucosamine biosynthesis; UDP-N-acetyl-alpha-D-glucosamine from N-acetyl-alpha-D-glucosamine 1-phosphate: step 1/1. It participates in bacterial outer membrane biogenesis; LPS lipid A biosynthesis. Its function is as follows. Catalyzes the last two sequential reactions in the de novo biosynthetic pathway for UDP-N-acetylglucosamine (UDP-GlcNAc). The C-terminal domain catalyzes the transfer of acetyl group from acetyl coenzyme A to glucosamine-1-phosphate (GlcN-1-P) to produce N-acetylglucosamine-1-phosphate (GlcNAc-1-P), which is converted into UDP-GlcNAc by the transfer of uridine 5-monophosphate (from uridine 5-triphosphate), a reaction catalyzed by the N-terminal domain. The protein is Bifunctional protein GlmU of Oenococcus oeni (strain ATCC BAA-331 / PSU-1).